Here is a 710-residue protein sequence, read N- to C-terminus: Serine/threonine-protein phosphatase PP-Z2 (710 aa).

The disordered stretch occupies residues methionine 1–asparagine 382. A lipid anchor (N-myristoyl glycine) is attached at glycine 2. Positions lysine 15–leucine 27 are enriched in basic and acidic residues. Residues serine 40–serine 49 show a composition bias toward low complexity. Serine 55 and serine 71 each carry phosphoserine. Composition is skewed to polar residues over residues asparagine 62–leucine 77 and proline 95–proline 104. Composition is skewed to low complexity over residues serine 105–serine 125 and asparagine 143–serine 155. Acidic residues predominate over residues leucine 160 to glycine 172. Threonine 161 is subject to Phosphothreonine. 2 positions are modified to phosphoserine: serine 203 and serine 224. Low complexity predominate over residues serine 247–serine 260. Over residues phenylalanine 261–leucine 273 the composition is skewed to polar residues. Threonine 271 is modified (phosphothreonine). Phosphoserine is present on serine 275. Positions aspartate 291 to proline 302 are enriched in polar residues. Serine 310 is modified (phosphoserine). Aspartate 454, histidine 456, aspartate 482, and asparagine 514 together coordinate Mn(2+). The active-site Proton donor is the histidine 515. Positions 563 and 638 each coordinate Mn(2+).

This sequence belongs to the PPP phosphatase family. PP-Z subfamily. Mn(2+) is required as a cofactor.

The enzyme catalyses O-phospho-L-seryl-[protein] + H2O = L-seryl-[protein] + phosphate. It catalyses the reaction O-phospho-L-threonyl-[protein] + H2O = L-threonyl-[protein] + phosphate. Its function is as follows. Essential for the maintenance of cell size and integrity in response to osmotic stress. This is Serine/threonine-protein phosphatase PP-Z2 (PPZ2) from Saccharomyces cerevisiae (strain ATCC 204508 / S288c) (Baker's yeast).